The chain runs to 192 residues: Imidazoleglycerol-phosphate dehydratase (192 aa).

The protein belongs to the imidazoleglycerol-phosphate dehydratase family.

It is found in the cytoplasm. It carries out the reaction D-erythro-1-(imidazol-4-yl)glycerol 3-phosphate = 3-(imidazol-4-yl)-2-oxopropyl phosphate + H2O. It functions in the pathway amino-acid biosynthesis; L-histidine biosynthesis; L-histidine from 5-phospho-alpha-D-ribose 1-diphosphate: step 6/9. This is Imidazoleglycerol-phosphate dehydratase from Staphylococcus aureus (strain bovine RF122 / ET3-1).